The sequence spans 123 residues: Fluoride-specific ion channel FluC (123 aa).

4 consecutive transmembrane segments (helical) span residues 5–25 (VWVA…YKFV), 33–53 (LATF…IGAF), 62–82 (LKLA…TFAA), and 94–114 (ITAF…VALG). 2 residues coordinate Na(+): glycine 72 and serine 75.

The protein belongs to the fluoride channel Fluc/FEX (TC 1.A.43) family.

It localises to the cell inner membrane. It carries out the reaction fluoride(in) = fluoride(out). With respect to regulation, na(+) is not transported, but it plays an essential structural role and its presence is essential for fluoride channel function. Fluoride-specific ion channel. Important for reducing fluoride concentration in the cell, thus reducing its toxicity. The protein is Fluoride-specific ion channel FluC of Ignicoccus hospitalis (strain KIN4/I / DSM 18386 / JCM 14125).